The following is a 606-amino-acid chain: NADH-ubiquinone oxidoreductase chain 5 (606 aa).

The next 15 membrane-spanning stretches (helical) occupy residues 4-24 (FSSL…MMSL), 43-63 (AFIT…ELII), 87-107 (MMFT…SMWY), 117-137 (FFKY…ANNL), 140-160 (LFIG…WWYG), 171-191 (AVLY…WFLT), 213-233 (LIGL…HPWL), 241-261 (TPVS…FLLI), 272-292 (FIQS…AMCA), 310-330 (LGLM…LHIC), 366-386 (MPFT…MPFL), 413-433 (LIAT…ALLG), 457-477 (LLIG…PTTI), 482-502 (MPYY…ILAL), and 582-602 (GLIK…MMLF).

Core subunit of respiratory chain NADH dehydrogenase (Complex I) which is composed of 45 different subunits.

The protein localises to the mitochondrion inner membrane. The enzyme catalyses a ubiquinone + NADH + 5 H(+)(in) = a ubiquinol + NAD(+) + 4 H(+)(out). Functionally, core subunit of the mitochondrial membrane respiratory chain NADH dehydrogenase (Complex I) which catalyzes electron transfer from NADH through the respiratory chain, using ubiquinone as an electron acceptor. Essential for the catalytic activity and assembly of complex I. The chain is NADH-ubiquinone oxidoreductase chain 5 (MT-ND5) from Bos indicus (Zebu).